The sequence spans 700 residues: ABC transporter B family member 26, chloroplastic (700 aa).

The N-terminal 59 residues, methionine 1–asparagine 59, are a transit peptide targeting the chloroplast. Transmembrane regions (helical) follow at residues tryptophan 137–proline 157, leucine 182–isoleucine 202, and leucine 268–isoleucine 288. In terms of domain architecture, ABC transmembrane type-1 spans isoleucine 139–glutamine 421. The ABC transporter domain maps to isoleucine 455–arginine 694. Position 490 to 497 (glycine 490 to serine 497) interacts with ATP.

Belongs to the ABC transporter superfamily. ABCB family. Multidrug resistance exporter (TC 3.A.1.201) subfamily.

Its subcellular location is the plastid. The protein resides in the chloroplast membrane. This chain is ABC transporter B family member 26, chloroplastic (ABCB26), found in Arabidopsis thaliana (Mouse-ear cress).